The primary structure comprises 298 residues: Probable endonuclease 4 (298 aa).

Positions 69, 111, 146, 180, 183, 215, 228, 230, and 260 each coordinate Zn(2+).

Belongs to the AP endonuclease 2 family. Zn(2+) serves as cofactor.

It catalyses the reaction Endonucleolytic cleavage to 5'-phosphooligonucleotide end-products.. Its function is as follows. Endonuclease IV plays a role in DNA repair. It cleaves phosphodiester bonds at apurinic or apyrimidinic (AP) sites, generating a 3'-hydroxyl group and a 5'-terminal sugar phosphate. This is Probable endonuclease 4 from Bacillus cereus (strain AH187).